The chain runs to 299 residues: tRNA dimethylallyltransferase (299 aa).

Residue 13–20 (GPTASGKT) participates in ATP binding. 15-20 (TASGKT) is a binding site for substrate. The interaction with substrate tRNA stretch occupies residues 38–41 (DSRQ).

Belongs to the IPP transferase family. In terms of assembly, monomer. Requires Mg(2+) as cofactor.

The catalysed reaction is adenosine(37) in tRNA + dimethylallyl diphosphate = N(6)-dimethylallyladenosine(37) in tRNA + diphosphate. Catalyzes the transfer of a dimethylallyl group onto the adenine at position 37 in tRNAs that read codons beginning with uridine, leading to the formation of N6-(dimethylallyl)adenosine (i(6)A). The chain is tRNA dimethylallyltransferase from Prochlorococcus marinus (strain MIT 9313).